The primary structure comprises 275 residues: uncharacterized protein (275 aa).

Residues 20–22 (RGQ), 41–42 (DI), 80–81 (DV), and Asn107 each bind NAD(+). Substrate is bound at residue Ser160. Tyr173 (proton acceptor) is an active-site residue. Residues Lys177 and 206–208 (VET) contribute to the NAD(+) site.

The protein belongs to the short-chain dehydrogenases/reductases (SDR) family.

This is an uncharacterized protein from Mycolicibacterium paratuberculosis (strain ATCC BAA-968 / K-10) (Mycobacterium paratuberculosis).